The chain runs to 268 residues: Thymidylate synthase (268 aa).

Residues R26 and 131 to 132 (RR) each bind dUMP. The active-site Nucleophile is the C151. DUMP-binding positions include 171 to 174 (RSAD), N182, and 212 to 214 (HIY). Position 174 (D174) interacts with (6R)-5,10-methylene-5,6,7,8-tetrahydrofolate. S267 contacts (6R)-5,10-methylene-5,6,7,8-tetrahydrofolate.

Belongs to the thymidylate synthase family. Bacterial-type ThyA subfamily. As to quaternary structure, homodimer.

The protein resides in the cytoplasm. The enzyme catalyses dUMP + (6R)-5,10-methylene-5,6,7,8-tetrahydrofolate = 7,8-dihydrofolate + dTMP. The protein operates within pyrimidine metabolism; dTTP biosynthesis. Functionally, catalyzes the reductive methylation of 2'-deoxyuridine-5'-monophosphate (dUMP) to 2'-deoxythymidine-5'-monophosphate (dTMP) while utilizing 5,10-methylenetetrahydrofolate (mTHF) as the methyl donor and reductant in the reaction, yielding dihydrofolate (DHF) as a by-product. This enzymatic reaction provides an intracellular de novo source of dTMP, an essential precursor for DNA biosynthesis. The protein is Thymidylate synthase of Corynebacterium aurimucosum (strain ATCC 700975 / DSM 44827 / CIP 107346 / CN-1) (Corynebacterium nigricans).